The chain runs to 308 residues: GATA transcription factor 9 (308 aa).

The interval 34–57 (DDGLNTLPDSSTLSTGTLTDSSNS) is disordered. Low complexity predominate over residues 39–57 (TLPDSSTLSTGTLTDSSNS). The Nuclear localization signal motif lies at 142–149 (KARSKRSR). Residues 193 to 247 (SGGGRRCLHCATEKTPQWRTGPMGPKTLCNACGVRYKSGRLVPEYRPASSPTFVM) form a GATA-type zinc finger.

It belongs to the type IV zinc-finger family. Class A subfamily.

It localises to the nucleus. Its function is as follows. Transcriptional activator that specifically binds 5'-GATA-3' or 5'-GAT-3' motifs within gene promoters. May be involved in the regulation of some light-responsive genes. This chain is GATA transcription factor 9 (GATA9), found in Arabidopsis thaliana (Mouse-ear cress).